Here is a 3630-residue protein sequence, read N- to C-terminus: Trimeric autotransporter adhesin AtaA (3630 aa).

The first 23 residues, 1 to 23, serve as a signal peptide directing secretion; that stretch reads MNKIYKVIWNATLLAWVAVSELA. Residues 24–3487 form a surface exposed passenger domain region; the sequence is KGKTKSTTSK…TNQAVVNYLG (3464 aa). Residues 108 to 315 form an N-terminal YadA-like head region; it reads SIAIGENAQG…ASDAVTVAQL (208 aa). The N-terminal stalk stretch occupies residues 316–2904; the sequence is DKAYDDTNGR…GRAATEEQLK (2589 aa). The interval 2905–3169 is C-terminal YadA-like head; the sequence is AVITSNITEV…DSDAVNVAQL (265 aa). Residues 3170–3561 are C-terminal stalk; the sequence is KAVGNQVVTT…DVEKKANAGI (392 aa). An outer membrane translocation of the passenger domain region spans residues 3539-3574; sequence LDNAFRITNNRIDDVEKKANAGIAAAMALESAPYVP. 4 beta stranded membrane passes run 3575-3585, 3589-3599, 3608-3614, and 3618-3629; these read GKYTYAAGAAY, ENAVGVTLRKT, TGGVAAA, and DASVRIGISGVI. The tract at residues 3575-3630 is translocator domain; sequence GKYTYAAGAAYHGGENAVGVTLRKTADNGRWSITGGVAAASQGDASVRIGISGVID.

It belongs to the autotransporter-2 (AT-2) (TC 1.B.40) family. In terms of assembly, homotrimer. Interacts with TpgA.

Its subcellular location is the cell surface. The protein localises to the cell outer membrane. In terms of biological role, responsible for autoagglutination, and for adhesion to abiotic and biotic surfaces such as polystyrene (PS), type I collagen, polypropylene (PP), polyvinylchloride (PVC), glass and stainless steel (SS). Adhesion is much stronger than that mediated by Yersinia YadA in a comparative assay. Confers autoagglutination and binding to PS, type I collagen, PP, PVC, glass and SS upon expression in Acinetobacter baylyi strain ADP1. Involved in rapid, irreversible adherence to polyurethane. Forms an unusual biofilm. An extended, surface exposed fiber binds to quartz crystals, PS and glass. It can be removed by washing in distilled water. The protein is Trimeric autotransporter adhesin AtaA of Acinetobacter sp. (strain Tol 5).